A 38-amino-acid polypeptide reads, in one-letter code: Photosystem II reaction center protein L (38 aa).

The helical transmembrane segment at 17-37 (SLYWGLLLIXVLAVLFSNYFF) threads the bilayer.

This sequence belongs to the PsbL family. As to quaternary structure, PSII is composed of 1 copy each of membrane proteins PsbA, PsbB, PsbC, PsbD, PsbE, PsbF, PsbH, PsbI, PsbJ, PsbK, PsbL, PsbM, PsbT, PsbX, PsbY, PsbZ, Psb30/Ycf12, at least 3 peripheral proteins of the oxygen-evolving complex and a large number of cofactors. It forms dimeric complexes.

It localises to the plastid. The protein resides in the chloroplast thylakoid membrane. In terms of biological role, one of the components of the core complex of photosystem II (PSII). PSII is a light-driven water:plastoquinone oxidoreductase that uses light energy to abstract electrons from H(2)O, generating O(2) and a proton gradient subsequently used for ATP formation. It consists of a core antenna complex that captures photons, and an electron transfer chain that converts photonic excitation into a charge separation. This subunit is found at the monomer-monomer interface and is required for correct PSII assembly and/or dimerization. This chain is Photosystem II reaction center protein L, found in Allium textile (Textile onion).